A 177-amino-acid polypeptide reads, in one-letter code: MMAKPKKTIPAKLSDERIVIYDKDGISRLNEKRYGELHENFLSLSYVEALYLVAKDWVLIRDKKNKILSFEELHEIAHVIDKKLCIRYLVYKDLRNRGYTVRTGLKYGSDFRLYERSNIDEVHSKYLVKVFSEEIPCEISEITGFVRVAHSVRKELVIAIVDADGSVVYYNMGYLKL.

Active-site residues include Tyr114, His123, and Lys154.

Belongs to the tRNA-intron endonuclease family. Archaeal short subfamily. Homotetramer; although the tetramer contains four active sites, only two participate in the cleavage. Therefore, it should be considered as a dimer of dimers.

The enzyme catalyses pretRNA = a 3'-half-tRNA molecule with a 5'-OH end + a 5'-half-tRNA molecule with a 2',3'-cyclic phosphate end + an intron with a 2',3'-cyclic phosphate and a 5'-hydroxyl terminus.. Endonuclease that removes tRNA introns. Cleaves pre-tRNA at the 5'- and 3'-splice sites to release the intron. The products are an intron and two tRNA half-molecules bearing 2',3' cyclic phosphate and 5'-OH termini. Recognizes a pseudosymmetric substrate in which 2 bulged loops of 3 bases are separated by a stem of 4 bp. The sequence is that of tRNA-splicing endonuclease from Methanococcus vannielii (strain ATCC 35089 / DSM 1224 / JCM 13029 / OCM 148 / SB).